A 597-amino-acid polypeptide reads, in one-letter code: Elongation factor 4 (597 aa).

Residues D2 to K184 enclose the tr-type G domain. GTP is bound by residues D14–T19 and N131–D134.

This sequence belongs to the TRAFAC class translation factor GTPase superfamily. Classic translation factor GTPase family. LepA subfamily.

It is found in the cell inner membrane. The enzyme catalyses GTP + H2O = GDP + phosphate + H(+). Functionally, required for accurate and efficient protein synthesis under certain stress conditions. May act as a fidelity factor of the translation reaction, by catalyzing a one-codon backward translocation of tRNAs on improperly translocated ribosomes. Back-translocation proceeds from a post-translocation (POST) complex to a pre-translocation (PRE) complex, thus giving elongation factor G a second chance to translocate the tRNAs correctly. Binds to ribosomes in a GTP-dependent manner. In Burkholderia ambifaria (strain MC40-6), this protein is Elongation factor 4.